The following is a 132-amino-acid chain: Small heat shock protein hspL (132 aa).

The sHSP domain maps to 15-131 (TFTNFVSAPV…VKMSNNNKVE (117 aa)).

Belongs to the small heat shock protein (HSP20) family.

This chain is Small heat shock protein hspL (hspL), found in Dictyostelium discoideum (Social amoeba).